Reading from the N-terminus, the 549-residue chain is SH3 domain-containing protein 21 (549 aa).

The interval 1 to 56 (MVQSELQLQPRAGRRADASNWGDFGSDKGGLGNTDIPPITPNSQRPPKLSNLTYDS) is disordered. Residues 41 to 54 (PNSQRPPKLSNLTY) are compositionally biased toward polar residues. The SH3 domain occupies 65–126 (SCPETCRVLF…PDNFVIPPPP (62 aa)). Disordered regions lie at residues 142 to 303 (PIKE…KPAK) and 332 to 479 (FKKE…KSKN). The span at 211 to 220 (QASQQHSASS) shows a compositional bias: low complexity. 2 stretches are compositionally biased toward basic and acidic residues: residues 267–280 (PVPK…KIPA) and 332–342 (FKKEPSRDNDQ). 2 stretches are compositionally biased toward polar residues: residues 343-365 (CQHL…NNIQ) and 439-456 (VLPQ…TIQQ). Residues 482–510 (MDVLESLKEEVGLLRSRLELLELKLEQKM) adopt a coiled-coil conformation. The tract at residues 528 to 549 (QMMQRNRKSFKHAETQTETQTE) is disordered.

This Mus musculus (Mouse) protein is SH3 domain-containing protein 21 (Sh3d21).